The sequence spans 576 residues: S-layer protein (576 aa).

The N-terminal stretch at 1-23 (KKIGAIAAGSAMVASALATGVFA) is a signal peptide. N-linked (GlcNAc...) asparagine glycans are attached at residues Asn-102 and Asn-132.

It belongs to the Mj S-layer protein family. Post-translationally, N-linked glycans consist of the 779 Da trisaccharide beta-ManNAc(Thr)-(1-4)-beta-GlcNAc3NAcA-(1-3)-beta-GlcNAc.

It is found in the secreted. The protein resides in the cell wall. Its subcellular location is the S-layer. Functionally, S-layer protein. The S-layer is a paracrystalline mono-layered assembly of proteins which coat the surface of the cell. The protein is S-layer protein (sla) of Methanococcus voltae.